Here is a 299-residue protein sequence, read N- to C-terminus: Lathosterol oxidase (299 aa).

Transmembrane regions (helical) follow at residues 32–52 (VSLL…CATL), 79–99 (FTVK…LLEL), and 117–137 (IHLI…IYWI). Positions 124-252 (ISFLFFTDML…YFTLWDRIGG (129 aa)) constitute a Fatty acid hydroxylase domain. The Histidine box-1 motif lies at 138–143 (HRGLHH). A Histidine box-2 motif is present at residues 151–155 (HKPHH). A Histidine box-3 motif is present at residues 228–233 (HHTDHH). Residue serine 253 is modified to Phosphoserine.

The protein belongs to the sterol desaturase family. Requires Fe cation as cofactor.

The protein localises to the endoplasmic reticulum membrane. The catalysed reaction is a Delta(7)-sterol + 2 Fe(II)-[cytochrome b5] + O2 + 2 H(+) = a Delta(5),Delta(7)-sterol + 2 Fe(III)-[cytochrome b5] + 2 H2O. The enzyme catalyses lathosterol + 2 Fe(II)-[cytochrome b5] + O2 + 2 H(+) = 7-dehydrocholesterol + 2 Fe(III)-[cytochrome b5] + 2 H2O. It catalyses the reaction 5alpha-cholesta-7,24-dien-3beta-ol + 2 Fe(II)-[cytochrome b5] + O2 + 2 H(+) = 7-dehydrodesmosterol + 2 Fe(III)-[cytochrome b5] + 2 H2O. It functions in the pathway steroid biosynthesis; cholesterol biosynthesis. Its function is as follows. Catalyzes the penultimate step of the biosynthesis of cholesterol, the dehydrogenation of lathosterol into 7-dehydrocholesterol (7-DHC). Cholesterol is the major sterol component in mammalian membranes and a precursor for bile acid and steroid hormone synthesis. In addition to its essential role in cholesterol biosynthesis, it also indirectly regulates ferroptosis through the production of 7-DHC. By diverting the spread of damage caused by peroxyl radicals from the phospholipid components to its sterol nucleus, 7-DHC prevents this form of cell death. The protein is Lathosterol oxidase of Rattus norvegicus (Rat).